A 453-amino-acid chain; its full sequence is Kynureninase (453 aa).

Pyridoxal 5'-phosphate-binding positions include Leu-111, Thr-112, 139–142, Ser-196, Asp-226, His-229, and Tyr-251; that span reads FPSD. Position 252 is an N6-(pyridoxal phosphate)lysine (Lys-252). Pyridoxal 5'-phosphate contacts are provided by Trp-286 and Asn-314.

The protein belongs to the kynureninase family. In terms of assembly, homodimer. Pyridoxal 5'-phosphate serves as cofactor.

The protein localises to the cytoplasm. It localises to the nucleus. It carries out the reaction L-kynurenine + H2O = anthranilate + L-alanine + H(+). It catalyses the reaction 3-hydroxy-L-kynurenine + H2O = 3-hydroxyanthranilate + L-alanine + H(+). It functions in the pathway amino-acid degradation; L-kynurenine degradation; L-alanine and anthranilate from L-kynurenine: step 1/1. Its pathway is cofactor biosynthesis; NAD(+) biosynthesis; quinolinate from L-kynurenine: step 2/3. Its function is as follows. Catalyzes the cleavage of L-kynurenine (L-Kyn) and L-3-hydroxykynurenine (L-3OHKyn) into anthranilic acid (AA) and 3-hydroxyanthranilic acid (3-OHAA), respectively. This chain is Kynureninase, found in Saccharomyces cerevisiae (strain ATCC 204508 / S288c) (Baker's yeast).